We begin with the raw amino-acid sequence, 693 residues long: Auxin response factor 10 (693 aa).

A DNA-binding region (TF-B3) is located at residues 115-217 (FAKTLTQSDA…DLCVGIRRAK (103 aa)). The PB1 domain maps to 580–668 (TGHCKVFMES…DIGGDNVRKT (89 aa)).

This sequence belongs to the ARF family. As to quaternary structure, homodimers and heterodimers. Expressed in the whole plant.

Its subcellular location is the nucleus. In terms of biological role, auxin response factors (ARFs) are transcriptional factors that bind specifically to the DNA sequence 5'-TGTCTC-3' found in the auxin-responsive promoter elements (AuxREs). Could act as transcriptional activator or repressor. Formation of heterodimers with Aux/IAA proteins may alter their ability to modulate early auxin response genes expression. This is Auxin response factor 10 (ARF10) from Arabidopsis thaliana (Mouse-ear cress).